The chain runs to 354 residues: 3-dehydroquinate synthase (354 aa).

NAD(+)-binding positions include 106–110 (GVIGD), 130–131 (TS), K143, and K152. E185, H246, and H262 together coordinate Zn(2+).

Belongs to the sugar phosphate cyclases superfamily. Dehydroquinate synthase family. Co(2+) serves as cofactor. The cofactor is Zn(2+). NAD(+) is required as a cofactor.

The protein resides in the cytoplasm. It carries out the reaction 7-phospho-2-dehydro-3-deoxy-D-arabino-heptonate = 3-dehydroquinate + phosphate. Its pathway is metabolic intermediate biosynthesis; chorismate biosynthesis; chorismate from D-erythrose 4-phosphate and phosphoenolpyruvate: step 2/7. Catalyzes the conversion of 3-deoxy-D-arabino-heptulosonate 7-phosphate (DAHP) to dehydroquinate (DHQ). The polypeptide is 3-dehydroquinate synthase (Leuconostoc mesenteroides subsp. mesenteroides (strain ATCC 8293 / DSM 20343 / BCRC 11652 / CCM 1803 / JCM 6124 / NCDO 523 / NBRC 100496 / NCIMB 8023 / NCTC 12954 / NRRL B-1118 / 37Y)).